A 742-amino-acid chain; its full sequence is MKDDFAEEEEVQSFGYKRFGIQEGTQCTKCKNNWALKFSIILLYILCALLTITVAILGYKVVEKMDNVTGGMETSRQTYDDKLTAVESDLKKLGDQTGKKAISTNSELSTFRSDILDLRQQLREITEKTSKNKDTLEKLQASGDALVDRQSQLKETLENNSFLITTVNKTLQAYNGYVTNLQQDTSVLQGNLQNQMYSHNVVIMNLNNLNLTQVQQRNLITNLQRSVDDTSQAIQRIKNDFQNLQQVFLQAKKDTDWLKEKVQSLQTLAANNSALAKANNDTLEDMNSQLNSFTGQMENITTISQANEQNLKDLQDLHKDAENRTAIKFNQLEERFQLFETDIVNIISNISYTAHHLRTLTSNLNEVRTTCTDTLTKHTDDLTSLNNTLANIRLDSVSLRMQQDLMRSRLDTEVANLSVIMEEMKLVDSKHGQLIKNFTILQGPPGPRGPRGDRGSQGPPGPTGNKGQKGEKGEPGPPGPAGERGPIGPAGPPGERGGKGSKGSQGPKGSRGSPGKPGPQGSSGDPGPPGPPGKEGLPGPQGPPGFQGLQGTVGEPGVPGPRGLPGLPGVPGMPGPKGPPGPPGPSGAVVPLALQNEPTPAPEDNGCPPHWKNFTDKCYYFSVEKEIFEDAKLFCEDKSSHLVFINTREEQQWIKKQMVGRESHWIGLTDSERENEWKWLDGTSPDYKNWKAGQPDNWGHGHGPGEDCAGLIYAGQWNDFQCEDVNNFICEKDRETVLSSAL.

At 1–37 the chain is on the cytoplasmic side; it reads MKDDFAEEEEVQSFGYKRFGIQEGTQCTKCKNNWALK. A helical; Signal-anchor for type II membrane protein membrane pass occupies residues 38–58; it reads FSIILLYILCALLTITVAILG. Residues 59 to 742 are Extracellular-facing; sequence YKVVEKMDNV…DRETVLSSAL (684 aa). Asn-67 carries an N-linked (GlcNAc...) asparagine glycan. Residues 73–141 adopt a coiled-coil conformation; sequence ETSRQTYDDK…NKDTLEKLQA (69 aa). Asn-159, Asn-168, and Asn-271 each carry an N-linked (GlcNAc...) asparagine glycan. Positions 215–328 form a coiled coil; sequence QQRNLITNLQ…KDAENRTAIK (114 aa). Residues 439–608 form a disordered region; sequence TILQGPPGPR…TPAPEDNGCP (170 aa). Collagen-like domains are found at residues 443-472, 473-529, and 530-589; these read GPPG…KGEK, GEPG…PGPP, and GPPG…SGAV. 2 stretches are compositionally biased toward low complexity: residues 502–525 and 534–556; these read KGSQ…SSGD and KEGL…VGEP. The span at 571-585 shows a compositional bias: pro residues; the sequence is PGMPGPKGPPGPPGP. Disulfide bonds link Cys-607-Cys-618, Cys-635-Cys-730, and Cys-708-Cys-722. Residues 614–731 enclose the C-type lectin domain; the sequence is FTDKCYYFSV…CEDVNNFICE (118 aa). Residues Phe-644, Asn-646, Glu-650, Asp-670, and Glu-674 each coordinate Ca(2+). Residues Lys-691, Gln-694, and Asp-696 each coordinate a carbohydrate. Positions 694, 696, 697, 706, 707, 718, 719, and 731 each coordinate Ca(2+). Residue Glu-706 coordinates a carbohydrate. Asn-718 and Asp-719 together coordinate a carbohydrate.

The extracellular domain forms a stable trimer. The extracellular domain interacts with fibrillar amyloid-beta peptide. Expressed in perivascular macrophages. Expressed in plaques-surrounding reactive astrocytes and in perivascular astrocytes associated with cerebral amyloid angiopathy (CAA) in the temporal cortex of Alzheimer patient (at protein level). Strongly expressed in placenta. Moderately expressed in heart, skeletal muscle, small intestine and lung. Weakly expressed in brain, colon, thymus and kidney. Expressed in nurse-like cells. Expressed in reactive astrocytes and vascular/perivascular cells in the brain of Alzheimer patient.

Its subcellular location is the membrane. Scavenger receptor that displays several functions associated with host defense. Promotes binding and phagocytosis of Gram-positive, Gram-negative bacteria and yeast. Mediates the recognition, internalization and degradation of oxidatively modified low density lipoprotein (oxLDL) by vascular endothelial cells. Binds to several carbohydrates including Gal-type ligands, D-galactose, L- and D-fucose, GalNAc, T and Tn antigens in a calcium-dependent manner and internalizes specifically GalNAc in nurse-like cells. Also binds to sialyl Lewis X or a trisaccharide and asialo-orosomucoid (ASOR). May also play a role in the clearance of amyloid-beta in Alzheimer disease. The protein is Collectin-12 (COLEC12) of Homo sapiens (Human).